The following is a 115-amino-acid chain: Phosphoribosyl-ATP pyrophosphatase (115 aa).

Belongs to the PRA-PH family.

The protein resides in the cytoplasm. It catalyses the reaction 1-(5-phospho-beta-D-ribosyl)-ATP + H2O = 1-(5-phospho-beta-D-ribosyl)-5'-AMP + diphosphate + H(+). It participates in amino-acid biosynthesis; L-histidine biosynthesis; L-histidine from 5-phospho-alpha-D-ribose 1-diphosphate: step 2/9. The chain is Phosphoribosyl-ATP pyrophosphatase from Bordetella parapertussis (strain 12822 / ATCC BAA-587 / NCTC 13253).